We begin with the raw amino-acid sequence, 256 residues long: tRNA pseudouridine synthase A (256 aa).

D52 serves as the catalytic Nucleophile. Y111 serves as a coordination point for substrate.

Belongs to the tRNA pseudouridine synthase TruA family. As to quaternary structure, homodimer.

The enzyme catalyses uridine(38/39/40) in tRNA = pseudouridine(38/39/40) in tRNA. Formation of pseudouridine at positions 38, 39 and 40 in the anticodon stem and loop of transfer RNAs. The polypeptide is tRNA pseudouridine synthase A (Paramagnetospirillum magneticum (strain ATCC 700264 / AMB-1) (Magnetospirillum magneticum)).